The primary structure comprises 78 residues: Major outer membrane lipoprotein Lpp (78 aa).

The signal sequence occupies residues 1–20; that stretch reads MKATKLVLGAVILGSTLLAG. Cysteine 21 carries the N-palmitoyl cysteine lipid modification. Residue cysteine 21 is the site of S-diacylglycerol cysteine attachment. 2 consecutive repeats follow at residues 24–34 and 38–48; these read NAKIDQLSSDV and NAKVDQLSNDV. Positions 27–75 form a coiled coil; that stretch reads IDQLSSDVQTLNAKVDQLSNDVNAMRSDVQAAKDDAARANQRLDNMATK. Position 78 is an N6-murein peptidoglycan lysine (lysine 78).

Belongs to the Lpp family. Homotrimer.

The protein localises to the cell outer membrane. It localises to the secreted. The protein resides in the cell wall. In terms of biological role, a highly abundant outer membrane lipoprotein that controls the distance between the inner and outer membranes. The only protein known to be covalently linked to the peptidoglycan network (PGN). Also non-covalently binds the PGN. The link between the cell outer membrane and PGN contributes to maintenance of the structural and functional integrity of the cell envelope, and maintains the correct distance between the PGN and the outer membrane. This is Major outer membrane lipoprotein Lpp from Shigella flexneri.